Here is a 468-residue protein sequence, read N- to C-terminus: Maltose fermentation regulatory protein MAL33 (468 aa).

The segment at residues 8–34 (CDYCRVRRVKCDGKKPCSRCIEHNFDC) is a DNA-binding region (zn(2)-C6 fungal-type). The Nuclear localization signal signature appears at 41–49 (KKRGSKPIG).

This sequence belongs to the MAL13 family.

It is found in the nucleus. Its function is as follows. Regulates the coordinate transcription of structural MAL3S (maltase) and MAL3T (maltose permease) genes. The protein is Maltose fermentation regulatory protein MAL33 (MAL33) of Saccharomyces cerevisiae (strain ATCC 204508 / S288c) (Baker's yeast).